The primary structure comprises 456 residues: Bifunctional protein GlmU (456 aa).

The segment at 1 to 228 (MPQNTLNIVI…SYLAAGVNNK (228 aa)) is pyrophosphorylase. Residues 11-14 (LAAG), lysine 25, glutamine 75, 80-81 (GT), 102-104 (YGD), glycine 138, glutamate 153, asparagine 168, and asparagine 226 contribute to the UDP-N-acetyl-alpha-D-glucosamine site. Aspartate 104 contributes to the Mg(2+) binding site. Asparagine 226 lines the Mg(2+) pocket. The interval 229–249 (LQLAELERIFQTEQAQELLKA) is linker. An N-acetyltransferase region spans residues 250–456 (GVTLSDPARF…GWVRPEKDKQ (207 aa)). Residues arginine 332 and lysine 350 each contribute to the UDP-N-acetyl-alpha-D-glucosamine site. The active-site Proton acceptor is the histidine 362. The UDP-N-acetyl-alpha-D-glucosamine site is built by tyrosine 365 and asparagine 376. Acetyl-CoA is bound by residues alanine 379, 385 to 386 (NY), serine 404, alanine 422, and arginine 439.

This sequence in the N-terminal section; belongs to the N-acetylglucosamine-1-phosphate uridyltransferase family. It in the C-terminal section; belongs to the transferase hexapeptide repeat family. As to quaternary structure, homotrimer. Mg(2+) serves as cofactor.

The protein localises to the cytoplasm. The catalysed reaction is alpha-D-glucosamine 1-phosphate + acetyl-CoA = N-acetyl-alpha-D-glucosamine 1-phosphate + CoA + H(+). It carries out the reaction N-acetyl-alpha-D-glucosamine 1-phosphate + UTP + H(+) = UDP-N-acetyl-alpha-D-glucosamine + diphosphate. The protein operates within nucleotide-sugar biosynthesis; UDP-N-acetyl-alpha-D-glucosamine biosynthesis; N-acetyl-alpha-D-glucosamine 1-phosphate from alpha-D-glucosamine 6-phosphate (route II): step 2/2. It participates in nucleotide-sugar biosynthesis; UDP-N-acetyl-alpha-D-glucosamine biosynthesis; UDP-N-acetyl-alpha-D-glucosamine from N-acetyl-alpha-D-glucosamine 1-phosphate: step 1/1. Its pathway is bacterial outer membrane biogenesis; LPS lipid A biosynthesis. Catalyzes the last two sequential reactions in the de novo biosynthetic pathway for UDP-N-acetylglucosamine (UDP-GlcNAc). The C-terminal domain catalyzes the transfer of acetyl group from acetyl coenzyme A to glucosamine-1-phosphate (GlcN-1-P) to produce N-acetylglucosamine-1-phosphate (GlcNAc-1-P), which is converted into UDP-GlcNAc by the transfer of uridine 5-monophosphate (from uridine 5-triphosphate), a reaction catalyzed by the N-terminal domain. The sequence is that of Bifunctional protein GlmU from Neisseria meningitidis serogroup C / serotype 2a (strain ATCC 700532 / DSM 15464 / FAM18).